The primary structure comprises 346 residues: Olfactory receptor 13D1 (346 aa).

The Extracellular portion of the chain corresponds to methionine 1–leucine 57. Asparagine 37 carries N-linked (GlcNAc...) asparagine glycosylation. Residues phenylalanine 58–isoleucine 78 form a helical membrane-spanning segment. Topologically, residues isoleucine 79 to arginine 86 are cytoplasmic. Residues leucine 87–serine 107 form a helical membrane-spanning segment. The Extracellular segment spans residues serine 108 to leucine 131. Residues cysteine 129 and cysteine 221 are joined by a disulfide bond. The helical transmembrane segment at glutamine 132–tyrosine 152 threads the bilayer. Residues aspartate 153–valine 171 lie on the Cytoplasmic side of the membrane. A helical transmembrane segment spans residues leucine 172–threonine 192. At valine 193–leucine 229 the chain is on the extracellular side. The chain crosses the membrane as a helical span at residues isoleucine 230–serine 249. The Cytoplasmic segment spans residues tyrosine 250–alanine 269. A helical membrane pass occupies residues phenylalanine 270–methionine 290. Residues tyrosine 291 to aspartate 303 lie on the Extracellular side of the membrane. N-linked (GlcNAc...) asparagine glycosylation is present at asparagine 300. A helical transmembrane segment spans residues glutamate 304–leucine 324. Residues arginine 325–methionine 346 are Cytoplasmic-facing.

The protein belongs to the G-protein coupled receptor 1 family.

Its subcellular location is the cell membrane. Its function is as follows. Odorant receptor. The polypeptide is Olfactory receptor 13D1 (OR13D1) (Homo sapiens (Human)).